Consider the following 163-residue polypeptide: ADP-ribosylation factor-like protein 2-binding protein (163 aa).

The protein belongs to the ARL2BP family. In terms of assembly, interacts with GTP bound ARL2 and ARL3; the complex ARL2-ARL2BP as well as ARL2BP alone, binds to SLC25A4/ANT1. Interaction with ARL2 may be required for targeting to cilia basal body. Interacts with STAT3; interaction is enhanced with ARL2. Found in a complex with ARL2BP, ARL2 and SLC25A6. Found in a complex with ARL2, ARL2BP and SLC25A4. Interacts with STAT2, STAT3 and STAT4. Widely expressed, with most abundant activity in brain, especially in hippocampus and cortex. Also expressed in lung, cerebellum, liver, kidney, retina, spleen, muscle and heart (at protein level).

It localises to the cytoplasm. The protein localises to the mitochondrion intermembrane space. The protein resides in the cytoskeleton. It is found in the microtubule organizing center. Its subcellular location is the centrosome. It localises to the nucleus. The protein localises to the cilium basal body. Together with ARL2, plays a role in the nuclear translocation, retention and transcriptional activity of STAT3. May play a role as an effector of ARL2. The protein is ADP-ribosylation factor-like protein 2-binding protein (Arl2bp) of Mus musculus (Mouse).